Reading from the N-terminus, the 343-residue chain is MDCSELDSTEKSKPSQLLRAINQIYEEGREESTHSETNAASVEKTMNLLKEKAETGDSQATFLLGQLHYVQGCYAEAELIFDRIKDKDPQALYQLAVIYYDGLGTKEDLGRAVEYMGRVAFWDSSEAGSVRYAALYNLGQAYLEGFGVQASSSEAERLWLLAADNGNPNASVKAQSALGMFYSRPESLDLRKAFFWHSQACGNGSLESQAALGLMYLYGHGVQRDSDSALFCLKEAAERGSVYAQGHLTACYYRRQLYSRAAALGQRVCEYKDTAAIAQQTDCLEEYVRKGIAIGMFYYARCLHLGRGVPQNRDKAKHYCTQAVRIDPLICKELQIDAAHGKI.

One copy of the TPR repeat lies at 58–91 (SQATFLLGQLHYVQGCYAEAELIFDRIKDKDPQA). 6 Sel1-like repeats span residues 92 to 124 (LYQL…FWDS), 132 to 167 (YAAL…DNGN), 172 to 205 (VKAQ…GNGS), 206 to 241 (LESQ…ERGS), 242 to 273 (VYAQ…EYKD), and 293 to 328 (AIGM…RIDP).

It localises to the cytoplasm. Its function is as follows. May act as an adapter that regulates LRP2 function. The chain is LRP2-binding protein (lrp2bp) from Danio rerio (Zebrafish).